The sequence spans 165 residues: Putative tyrosine-protein phosphatase AMV078 (165 aa).

The Tyrosine-protein phosphatase domain occupies 2 to 149 (NISNINNDIY…LKFYNSYKNI (148 aa)). The active-site Phosphocysteine intermediate is C94.

The protein belongs to the protein-tyrosine phosphatase family. Non-receptor class dual specificity subfamily.

The catalysed reaction is O-phospho-L-tyrosyl-[protein] + H2O = L-tyrosyl-[protein] + phosphate. This chain is Putative tyrosine-protein phosphatase AMV078, found in Amsacta moorei entomopoxvirus (AmEPV).